We begin with the raw amino-acid sequence, 279 residues long: DegV domain-containing protein SA1258 (279 aa).

A DegV domain is found at 4–278 (QIIVTDSTSD…QGAIGLVVLK (275 aa)). 2 residues coordinate hexadecanoate: T61 and S93.

Functionally, may bind long-chain fatty acids, such as palmitate, and may play a role in lipid transport or fatty acid metabolism. This is DegV domain-containing protein SA1258 from Staphylococcus aureus (strain N315).